Reading from the N-terminus, the 611-residue chain is UvrABC system protein C (611 aa).

Residues 14–91 (TSPGCYIHKD…IKENKPKYNI (78 aa)) form the GIY-YIG domain. The UVR domain occupies 196-231 (DQIIEDLRGKMAGAAQTMEFEKAAEYRDLIQSIGTL).

The protein belongs to the UvrC family. As to quaternary structure, interacts with UvrB in an incision complex.

It localises to the cytoplasm. Functionally, the UvrABC repair system catalyzes the recognition and processing of DNA lesions. UvrC both incises the 5' and 3' sides of the lesion. The N-terminal half is responsible for the 3' incision and the C-terminal half is responsible for the 5' incision. The chain is UvrABC system protein C from Streptococcus gordonii (strain Challis / ATCC 35105 / BCRC 15272 / CH1 / DL1 / V288).